We begin with the raw amino-acid sequence, 395 residues long: Probable alcohol dehydrogenase EutG (395 aa).

NAD(+) is bound by residues Asp-57, 116–120 (GSVLD), 156–160 (TTAGT), Lys-178, and 197–201 (LTEGV). 4 residues coordinate Fe cation: Asp-212, His-216, His-281, and His-295. NAD(+) contacts are provided by His-295 and Asp-354.

Belongs to the iron-containing alcohol dehydrogenase family. The cofactor is Fe cation.

Its subcellular location is the bacterial microcompartment. It carries out the reaction ethanol + NAD(+) = acetaldehyde + NADH + H(+). It functions in the pathway amine and polyamine degradation; ethanolamine degradation. In terms of biological role, may act on the acetaldehyde produced from the degradation of ethanolamine, producing ethanol. Active on acetaldehyde and isobutyraldehyde in vitro. In vitro works equally well with NADH or NADPH. The sequence is that of Probable alcohol dehydrogenase EutG (eutG) from Escherichia coli (strain K12).